Consider the following 151-residue polypeptide: Small ribosomal subunit protein uS15 (151 aa).

The tract at residues 1-20 is disordered; it reads MARLHSGKRGSSGSTRPLRT.

Belongs to the universal ribosomal protein uS15 family. In terms of assembly, part of the 30S ribosomal subunit.

This is Small ribosomal subunit protein uS15 from Methanococcus aeolicus (strain ATCC BAA-1280 / DSM 17508 / OCM 812 / Nankai-3).